A 215-amino-acid polypeptide reads, in one-letter code: Small ribosomal subunit protein uS7 (215 aa).

The protein belongs to the universal ribosomal protein uS7 family. As to quaternary structure, part of the 30S ribosomal subunit.

One of the primary rRNA binding proteins, it binds directly to 16S rRNA where it nucleates assembly of the head domain of the 30S subunit. Is located at the subunit interface close to the decoding center. The polypeptide is Small ribosomal subunit protein uS7 (Thermococcus gammatolerans (strain DSM 15229 / JCM 11827 / EJ3)).